The chain runs to 319 residues: Beta-sarcoglycan (319 aa).

The span at 1-10 shows a compositional bias: low complexity; that stretch reads MAAAAAAAAA. Positions 1-33 are disordered; that stretch reads MAAAAAAAAAEQQSSNGPVKKSMREKAVERRNV. Topologically, residues 1 to 66 are cytoplasmic; sequence MAAAAAAAAA…GLRGRKGNLA (66 aa). The segment covering 22–33 has biased composition (basic and acidic residues); that stretch reads SMREKAVERRNV. A helical; Signal-anchor for type II membrane protein transmembrane segment spans residues 67 to 87; the sequence is ICVIILLFILAVINLIITLVI. Topologically, residues 88-318 are extracellular; that stretch reads WAVIRIGPNG…QISDNPCGNT (231 aa). Asn-159, Asn-212, and Asn-259 each carry an N-linked (GlcNAc...) asparagine glycan. Intrachain disulfides connect Cys-289–Cys-315 and Cys-291–Cys-308.

The protein belongs to the sarcoglycan beta/delta/gamma/zeta family. As to quaternary structure, cross-link to form 2 major subcomplexes: one consisting of SGCB, SGCD and SGCG and the other consisting of SGCB and SGCD. The association between SGCB and SGCG is particularly strong while SGCA is loosely associated with the other sarcoglycans. In terms of processing, disulfide bonds are present.

It localises to the cell membrane. Its subcellular location is the sarcolemma. It is found in the cytoplasm. The protein resides in the cytoskeleton. Its function is as follows. Component of the sarcoglycan complex, a subcomplex of the dystrophin-glycoprotein complex which forms a link between the F-actin cytoskeleton and the extracellular matrix. This Pongo abelii (Sumatran orangutan) protein is Beta-sarcoglycan (SGCB).